The chain runs to 832 residues: Protein P (832 aa).

Positions 1-177 (MPLSYQHFRR…FCGSPYSWEQ (177 aa)) are terminal protein domain (TP). Positions 178–335 (ELQHGAESFH…YCLSHIVNLL (158 aa)) are spacer. A disordered region spans residues 186-229 (FHQQSSGILSRPPVGSSLQSKHSKSRLGLQSQQGHLARRQQGRS). A polymerase/reverse transcriptase domain (RT) region spans residues 336–679 (EDWGPCAEHG…YLNLYPVARQ (344 aa)). The region spanning 346 to 589 (EHHIRTPRTP…YSLNFMGYVI (244 aa)) is the Reverse transcriptase domain. Mg(2+) is bound by residues aspartate 418, aspartate 540, and aspartate 541.

Belongs to the hepadnaviridae P protein family.

The enzyme catalyses DNA(n) + a 2'-deoxyribonucleoside 5'-triphosphate = DNA(n+1) + diphosphate. The catalysed reaction is Endonucleolytic cleavage to 5'-phosphomonoester.. Its activity is regulated as follows. Activated by host HSP70 and HSP40 in vitro to be able to bind the epsilon loop of the pgRNA. Because deletion of the RNase H region renders the protein partly chaperone-independent, the chaperones may be needed indirectly to relieve occlusion of the RNA-binding site by this domain. Inhibited by several reverse-transcriptase inhibitors: Lamivudine, Adefovir and Entecavir. Functionally, multifunctional enzyme that converts the viral RNA genome into dsDNA in viral cytoplasmic capsids. This enzyme displays a DNA polymerase activity that can copy either DNA or RNA templates, and a ribonuclease H (RNase H) activity that cleaves the RNA strand of RNA-DNA heteroduplexes in a partially processive 3'- to 5'-endonucleasic mode. Neo-synthesized pregenomic RNA (pgRNA) are encapsidated together with the P protein, and reverse-transcribed inside the nucleocapsid. Initiation of reverse-transcription occurs first by binding the epsilon loop on the pgRNA genome, and is initiated by protein priming, thereby the 5'-end of (-)DNA is covalently linked to P protein. Partial (+)DNA is synthesized from the (-)DNA template and generates the relaxed circular DNA (RC-DNA) genome. After budding and infection, the RC-DNA migrates in the nucleus, and is converted into a plasmid-like covalently closed circular DNA (cccDNA). The activity of P protein does not seem to be necessary for cccDNA generation, and is presumably released from (+)DNA by host nuclear DNA repair machinery. The polypeptide is Protein P (Hepatitis B virus genotype D (isolate Germany/1-91/1991) (HBV-D)).